The primary structure comprises 640 residues: Fructose-1,6-bisphosphatase class 3 (640 aa).

It belongs to the FBPase class 3 family. The cofactor is Mn(2+).

It catalyses the reaction beta-D-fructose 1,6-bisphosphate + H2O = beta-D-fructose 6-phosphate + phosphate. Its pathway is carbohydrate biosynthesis; gluconeogenesis. The chain is Fructose-1,6-bisphosphatase class 3 from Lactococcus lactis subsp. lactis (strain IL1403) (Streptococcus lactis).